Consider the following 359-residue polypeptide: Peroxisome assembly protein 12 (359 aa).

Residues 1–19 (MAEHGAHITTASVADDQPS) are Peroxisomal matrix-facing. A helical membrane pass occupies residues 20–47 (IFEVVAQDSLMTAVRPALQHVVKVLAES). Topologically, residues 48 to 51 (NPAH) are cytoplasmic. A helical transmembrane segment spans residues 52–76 (YGFFWRWFDEIFTLLDFLLQQHYLS). Residues 77 to 109 (RTSASFSEHFYGLKRIVAGSSPQLQRPASAGLP) are Peroxisomal matrix-facing. The chain crosses the membrane as a helical span at residues 110 to 139 (KEHLWKSAMFLVLLPYLKVKLEKLASTLRE). Residues 140 to 144 (EDEYS) are Cytoplasmic-facing. Residues 145-183 (IHPPSSHWKRFYRVFLAAYPFVTMTWEGWFLTQQLRYIL) traverse the membrane as a helical segment. The Peroxisomal matrix portion of the chain corresponds to 184–249 (GKAEHHSPLL…VGGVALSLST (66 aa)). The helical transmembrane segment at 250–277 (GLSVGVFFLQFLDWWYSSENQETIKSLT) threads the bilayer. Residues 278–359 (ALPTPPPPVH…HLIKLYSPEN (82 aa)) are Cytoplasmic-facing. Zn(2+)-binding residues include Cys304, Cys307, Cys325, and Cys328. The RING-type; degenerate zinc-finger motif lies at 304–343 (CPLCRKARVNDTVLATSGYVFCYRCVFNYVRSHQACPITG).

This sequence belongs to the pex2/pex10/pex12 family. Component of the PEX2-PEX10-PEX12 retrotranslocation channel, composed of PEX2, PEX10 and PEX12. Interacts with PEX19 via its cytoplasmic domain.

The protein resides in the peroxisome membrane. It functions in the pathway protein modification; protein ubiquitination. Component of a retrotranslocation channel required for peroxisome organization by mediating export of the PEX5 receptor from peroxisomes to the cytosol, thereby promoting PEX5 recycling. The retrotranslocation channel is composed of PEX2, PEX10 and PEX12; each subunit contributing transmembrane segments that coassemble into an open channel that specifically allows the passage of PEX5 through the peroxisomal membrane. PEX12 also regulates PEX5 recycling by activating the E3 ubiquitin-protein ligase activity of PEX10. When PEX5 recycling is compromised, PEX12 stimulates PEX10-mediated polyubiquitination of PEX5, leading to its subsequent degradation. The protein is Peroxisome assembly protein 12 (Pex12) of Rattus norvegicus (Rat).